We begin with the raw amino-acid sequence, 394 residues long: MVKKVALAYSGGLDTSVCIPILKEKYGYDEVITISVDVGQPEEEIRKADAKAQKISNKHYTIDAKEEFVRDYIFPLIKANGNYEGYVMGTSVARPLIAKKVVEAAKKEGAIALAHGCTGKGNDQLRFEAVFRQTDMDVIAPMREMNLTREWEINYAKEHGIPVEATKSKPWSVDENIWSRSIEGGRLEDPSFVPPEEIFEWTKSAEDAPNEPRIVDIDFEAGVPVAIDGEKLGGYALVKKMNEIAGENGVGRTDMIEDRVLGLKARENYEHPAATVLLAAHADLEKLVLTRGELKFKKIVEEQWSEMAYAGLVDDPLFADLNAFIDKSQERVTGTVKVKLYKGALTILARSSPNALYSEDLVSFDSQTIDQKDAEGFAKYHGFQARMYRKVVGK.

8–16 is a binding site for ATP; that stretch reads AYSGGLDTS. Residues tyrosine 86 and serine 91 each coordinate L-citrulline. Glycine 116 serves as a coordination point for ATP. L-aspartate is bound by residues threonine 118, asparagine 122, and aspartate 123. Asparagine 122 serves as a coordination point for L-citrulline. Residues arginine 126, serine 172, serine 181, glutamate 257, and tyrosine 269 each coordinate L-citrulline.

Belongs to the argininosuccinate synthase family. Type 1 subfamily. Homotetramer.

It is found in the cytoplasm. It catalyses the reaction L-citrulline + L-aspartate + ATP = 2-(N(omega)-L-arginino)succinate + AMP + diphosphate + H(+). It functions in the pathway amino-acid biosynthesis; L-arginine biosynthesis; L-arginine from L-ornithine and carbamoyl phosphate: step 2/3. The polypeptide is Argininosuccinate synthase (Methanosarcina mazei (strain ATCC BAA-159 / DSM 3647 / Goe1 / Go1 / JCM 11833 / OCM 88) (Methanosarcina frisia)).